The chain runs to 392 residues: Formate-dependent phosphoribosylglycinamide formyltransferase (392 aa).

N(1)-(5-phospho-beta-D-ribosyl)glycinamide is bound by residues 22–23 (EL) and Glu82. ATP contacts are provided by residues Arg114, Lys155, 160–165 (SSGKGQ), 195–198 (EGVV), and Glu203. The 190-residue stretch at 119-308 (RLAAEELGLP…EFALHVRAFL (190 aa)) folds into the ATP-grasp domain. Glu267 and Glu279 together coordinate Mg(2+). N(1)-(5-phospho-beta-D-ribosyl)glycinamide is bound by residues Asp286, Lys355, and 362–363 (RR).

It belongs to the PurK/PurT family. Homodimer.

It catalyses the reaction N(1)-(5-phospho-beta-D-ribosyl)glycinamide + formate + ATP = N(2)-formyl-N(1)-(5-phospho-beta-D-ribosyl)glycinamide + ADP + phosphate + H(+). It participates in purine metabolism; IMP biosynthesis via de novo pathway; N(2)-formyl-N(1)-(5-phospho-D-ribosyl)glycinamide from N(1)-(5-phospho-D-ribosyl)glycinamide (formate route): step 1/1. Its function is as follows. Involved in the de novo purine biosynthesis. Catalyzes the transfer of formate to 5-phospho-ribosyl-glycinamide (GAR), producing 5-phospho-ribosyl-N-formylglycinamide (FGAR). Formate is provided by PurU via hydrolysis of 10-formyl-tetrahydrofolate. The sequence is that of Formate-dependent phosphoribosylglycinamide formyltransferase from Salmonella paratyphi B (strain ATCC BAA-1250 / SPB7).